Consider the following 248-residue polypeptide: MRRPIIAGNWKMHMTPSEAVKLVDELIPQVKDAKAEVVVIPPFVDLTEVNKVIQGTNILLGAQDMFWEEKGAYTGEISPLMLKEIGVKYVVIGHSERRQYFGETDEMVNKKVLSALSHGLSPIVCVGESFSQREEGKTFEVVLSQTKEALKGVTHDDIVNVVIAYEPIWAIGTGKTATAKDANEVIKAIRNTIASLYGKEKADLVRIQYGGSVKPENISELMAESDIDGALVGGASLVASDFAKIVNY.

9–11 is a binding site for substrate; the sequence is NWK. The Electrophile role is filled by His-94. Glu-166 functions as the Proton acceptor in the catalytic mechanism. Residues Gly-172, Ser-212, and 233–234 each bind substrate; that span reads GG.

The protein belongs to the triosephosphate isomerase family. In terms of assembly, homodimer.

The protein resides in the cytoplasm. The catalysed reaction is D-glyceraldehyde 3-phosphate = dihydroxyacetone phosphate. Its pathway is carbohydrate biosynthesis; gluconeogenesis. It participates in carbohydrate degradation; glycolysis; D-glyceraldehyde 3-phosphate from glycerone phosphate: step 1/1. In terms of biological role, involved in the gluconeogenesis. Catalyzes stereospecifically the conversion of dihydroxyacetone phosphate (DHAP) to D-glyceraldehyde-3-phosphate (G3P). The protein is Triosephosphate isomerase of Thermoanaerobacter sp. (strain X514).